The sequence spans 340 residues: Putative 2-hydroxyacid dehydrogenase C1773.17c (340 aa).

NAD(+)-binding positions include 169–170, 249–251, and Asp-275; these read AI and TAR. The active site involves Arg-251. The active site involves Glu-280. The Proton donor role is filled by His-298. Residue 298 to 301 coordinates NAD(+); sequence HCGV.

The protein belongs to the D-isomer specific 2-hydroxyacid dehydrogenase family.

This chain is Putative 2-hydroxyacid dehydrogenase C1773.17c, found in Schizosaccharomyces pombe (strain 972 / ATCC 24843) (Fission yeast).